Here is a 776-residue protein sequence, read N- to C-terminus: Isoamylase (776 aa).

A signal peptide spans 1-26 (MKCPKILAALLGCAVLAGVPAMPAHA). Positions 154, 255, 256, 258, and 285 each coordinate Ca(2+). The active-site Nucleophile is the Asp401. Cysteines 410 and 422 form a disulfide. Glu461 acts as the Proton donor in catalysis. 2 disulfides stabilise this stretch: Cys546-Cys616 and Cys738-Cys766.

This sequence belongs to the glycosyl hydrolase 13 family. Monomer. It depends on Ca(2+) as a cofactor.

The protein localises to the secreted. It carries out the reaction Hydrolysis of (1-&gt;6)-alpha-D-glucosidic branch linkages in glycogen, amylopectin and their beta-limit dextrins.. The polypeptide is Isoamylase (iam) (Pseudomonas amyloderamosa).